Consider the following 262-residue polypeptide: Probable carboxylesterase Culp3 (262 aa).

The signal sequence occupies residues 1-41; it reads MNNRPIRLLTSGRAGLGAGALITAVVLLIALGAVWTLVAFA. Cys44 and Cys114 form a disulfide bridge. Residue Ser125 is the Nucleophile of the active site. Cysteines 188 and 195 form a disulfide. Asp192 is an active-site residue. His206 (proton donor/acceptor) is an active-site residue. Positions 241-262 are disordered; it reads LPGSVLQMPGTAAPAPESLHGR.

Belongs to the cutinase family.

The protein resides in the secreted. The sequence is that of Probable carboxylesterase Culp3 (cut3) from Mycobacterium tuberculosis (strain CDC 1551 / Oshkosh).